The chain runs to 521 residues: Type-1 glutamine synthetase 2 (521 aa).

The region spanning 76 to 176 is the GS beta-grasp domain; sequence NQIKISKSPF…FLMDFIGTNG (101 aa). The region spanning 183-521 is the GS catalytic domain; the sequence is PRSTLKKVIK…WELERYLEII (339 aa).

It belongs to the glutamine synthetase family.

It catalyses the reaction L-glutamate + NH4(+) + ATP = L-glutamine + ADP + phosphate + H(+). The sequence is that of Type-1 glutamine synthetase 2 (glnA2) from Dictyostelium discoideum (Social amoeba).